The sequence spans 269 residues: Shikimate dehydrogenase (NADP(+)) (269 aa).

Residues 17 to 19 (SKS) and Thr64 contribute to the shikimate site. Residue Lys68 is the Proton acceptor of the active site. NADP(+) is bound at residue Glu80. Positions 89 and 105 each coordinate shikimate. Residues 130–134 (GAGGA), 154–159 (NRTRAK), and Met213 contribute to the NADP(+) site. A shikimate-binding site is contributed by Tyr215. Residue Gly237 coordinates NADP(+).

It belongs to the shikimate dehydrogenase family. Homodimer.

It catalyses the reaction shikimate + NADP(+) = 3-dehydroshikimate + NADPH + H(+). The protein operates within metabolic intermediate biosynthesis; chorismate biosynthesis; chorismate from D-erythrose 4-phosphate and phosphoenolpyruvate: step 4/7. Involved in the biosynthesis of the chorismate, which leads to the biosynthesis of aromatic amino acids. Catalyzes the reversible NADPH linked reduction of 3-dehydroshikimate (DHSA) to yield shikimate (SA). This chain is Shikimate dehydrogenase (NADP(+)), found in Neisseria meningitidis serogroup C / serotype 2a (strain ATCC 700532 / DSM 15464 / FAM18).